The primary structure comprises 492 residues: KAT8 regulatory NSL complex subunit 2 (492 aa).

Residue Lys-78 forms a Glycyl lysine isopeptide (Lys-Gly) (interchain with G-Cter in SUMO2) linkage. The segment at 126 to 182 (ELGSQTPESSRSEASRILDEDSWSDGEQEPITVDQTWRGDPDSEADSIDRDQEDPLK) is disordered. Position 131 is a phosphothreonine (Thr-131). Residues 135 to 144 (SRSEASRILD) show a composition bias toward basic and acidic residues. Ser-147, Ser-149, Ser-168, and Ser-172 each carry phosphoserine. Positions 162 to 182 (WRGDPDSEADSIDRDQEDPLK) are enriched in basic and acidic residues. Residues 308-364 (DVRCSNQSLPMTRHCLTHICQDTNRVLFKCCQGSEEVPCNKPVPVSLSEDPCCPLHF) are required for interaction with other NSL complex members. The segment at 453–492 (QMAGDGCRSQGPRNSEKAPAPLSQSGIATANGKPEPTSVS) is disordered.

In terms of assembly, component of the NSL complex at least composed of KAT8/MOF, KANSL1, KANSL2, KANSL3, MCRS1, PHF20, OGT1/OGT, WDR5 and HCFC1. Ubiquitously expressed.

Its subcellular location is the nucleus. It localises to the mitochondrion. Its function is as follows. Non-catalytic component of the NSL histone acetyltransferase complex, a multiprotein complex that mediates histone H4 acetylation at 'Lys-5'- and 'Lys-8' (H4K5ac and H4K8ac) at transcription start sites and promotes transcription initiation. Required for NSL complex stability and for transcription of intraciliary transport genes in both ciliated and non-ciliated cells by regulating histone H4 acetylation at 'Lys-5'- and 'Lys-12' (H4K5ac and H4K12ac). This is necessary for cilium assembly in ciliated cells and for organization of the microtubule cytoskeleton in non-ciliated cells. Required within the NSL complex to maintain nuclear architecture stability by promoting KAT8-mediated acetylation of lamin LMNA. The chain is KAT8 regulatory NSL complex subunit 2 (KANSL2) from Capra hircus (Goat).